A 1891-amino-acid chain; its full sequence is TATA-binding protein-associated factor mot1 (1891 aa).

The stretch at 30-68 (PDELFNLLGRILPYLRSKSWDTRAAAAKAIGLIVANADT) is one HEAT 1 repeat. Disordered stretches follow at residues 184-216 (FVAS…LSKR), 241-283 (LSSR…LDRS), and 295-316 (FKGA…EGPN). Basic and acidic residues predominate over residues 264-275 (ENGEERNGDSKP). HEAT repeat units lie at residues 473–511 (SKLM…EFVK) and 569–606 (SSFG…LEGE). Positions 699 to 710 (SAAAPARSSPAS) are enriched in low complexity. A disordered region spans residues 699-740 (SAAAPARSSPASNTPEGTKGRRRKSEKKEAPPPSAHNVDGHM). HEAT repeat units follow at residues 957–996 (PKKP…YYTT), 1139–1177 (YPWV…VITV), 1181–1216 (TMLV…VMED), and 1219–1257 (LPYV…LVPL). In terms of domain architecture, Helicase ATP-binding spans 1316–1489 (AFLNRYNLHG…WSLFDFLMPG (174 aa)). 1329–1336 (DDMGLGKT) provides a ligand contact to ATP. A DEAH box motif is present at residues 1440–1443 (DEGH). The HEAT 8 repeat unit spans residues 1526 to 1565 (EALHKQVLPFLLRRLKEEVLNDLPPKIIQNYYCDPSELQR). The Helicase C-terminal domain maps to 1663–1813 (DLSGASYVSP…STVVNQQNAG (151 aa)).

Belongs to the SNF2/RAD54 helicase family. As to quaternary structure, forms the NCT transcriptional regulatory complex with nctA and nctB.

It localises to the nucleus. Its function is as follows. Regulates transcription in association with TATA binding protein (TBP). Removes TBP from the TATA box via its C-terminal ATPase activity. Both transcription activation and repression require its ATPase activity. Part of the NCT transcriptional regulatory complex that acts as a key regulator of ergosterol biosynthesis and the azole exporter cdr1B. The NCT complex binds the promoters of genes linked to azole susceptibility, and especially represses the expression of cdr1B transporter. This chain is TATA-binding protein-associated factor mot1, found in Aspergillus fumigatus (strain CBS 144.89 / FGSC A1163 / CEA10) (Neosartorya fumigata).